A 167-amino-acid polypeptide reads, in one-letter code: Signal peptidase complex catalytic subunit SEC11 (167 aa).

At 1 to 9 (MNLRFELQK) the chain is on the cytoplasmic side. Residues 10-30 (LLNVCFLFASAYMFWQGLAIA) form a helical; Signal-anchor for type II membrane protein membrane-spanning segment. Residues 31 to 167 (TNSASPIVVV…LGLSALLGGE (137 aa)) are Lumenal-facing. Catalysis depends on charge relay system residues serine 44, histidine 83, and aspartate 109. Residue asparagine 121 is glycosylated (N-linked (GlcNAc...) asparagine). Positions 153 to 164 (ALLGMLGLSALL) are C-terminal short (CTS) helix.

Belongs to the peptidase S26B family. Component of the signal peptidase complex (SPC) composed of a catalytic subunit SEC11 and three accessory subunits SPC1, SPC2 and SPC3. The complex induces a local thinning of the ER membrane which is used to measure the length of the signal peptide (SP) h-region of protein substrates. This ensures the selectivity of the complex towards h-regions shorter than 18-20 amino acids. SPC associates with the translocon complex.

It localises to the endoplasmic reticulum membrane. The enzyme catalyses Cleavage of hydrophobic, N-terminal signal or leader sequences from secreted and periplasmic proteins.. In terms of biological role, catalytic component of the signal peptidase complex (SPC) which catalyzes the cleavage of N-terminal signal sequences from nascent proteins as they are translocated into the lumen of the endoplasmic reticulum. Specifically cleaves N-terminal signal peptides that contain a hydrophobic alpha-helix (h-region) shorter than 18-20 amino acids. The sequence is that of Signal peptidase complex catalytic subunit SEC11 (SEC11) from Saccharomyces cerevisiae (strain Lalvin QA23) (Baker's yeast).